The sequence spans 142 residues: Transcription antitermination protein NusB (142 aa).

It belongs to the NusB family.

In terms of biological role, involved in transcription antitermination. Required for transcription of ribosomal RNA (rRNA) genes. Binds specifically to the boxA antiterminator sequence of the ribosomal RNA (rrn) operons. The protein is Transcription antitermination protein NusB of Borreliella burgdorferi (strain ATCC 35210 / DSM 4680 / CIP 102532 / B31) (Borrelia burgdorferi).